The chain runs to 566 residues: Autophagy-related protein 22-1 (566 aa).

The helical transmembrane segment at 38–58 (YPIAAEVFAVVAVGAFLPVIL) threads the bilayer. A glycan (N-linked (GlcNAc...) asparagine) is linked at Asn103. The next 3 membrane-spanning stretches (helical) occupy residues 110 to 130 (SFAM…LVCF), 146 to 168 (AFAY…VYFL), and 179 to 199 (SLGC…ANHA). N-linked (GlcNAc...) asparagine glycosylation occurs at Asn200. 8 helical membrane passes run 242–262 (GYGY…LWLF), 278–298 (VILL…LLWL), 351–371 (FLIS…TAVL), 382–402 (IAIA…AFAW), 416–436 (ILLC…LGFI), 451–471 (WEIY…SSYA), 488–510 (FALY…GWLV), and 519–539 (AFIF…MLDV). The interval 547-566 (KAMADGEGRGRGTYERVREE) is disordered.

The protein belongs to the ATG22 family.

Its subcellular location is the vacuole membrane. Functionally, vacuolar effluxer which mediate the efflux of amino acids resulting from autophagic degradation. The release of autophagic amino acids allows the maintenance of protein synthesis and viability during nitrogen starvation. The protein is Autophagy-related protein 22-1 (ATG22-1) of Phaeosphaeria nodorum (strain SN15 / ATCC MYA-4574 / FGSC 10173) (Glume blotch fungus).